The chain runs to 238 residues: Small ribosomal subunit protein uS2 (238 aa).

The protein belongs to the universal ribosomal protein uS2 family.

The sequence is that of Small ribosomal subunit protein uS2 from Chloroflexus aurantiacus (strain ATCC 29366 / DSM 635 / J-10-fl).